A 203-amino-acid polypeptide reads, in one-letter code: Small ribosomal subunit protein uS5 (203 aa).

An S5 DRBM domain is found at 51–114 (LEDEVLDITM…ENAKLNVVRI (64 aa)).

The protein belongs to the universal ribosomal protein uS5 family. As to quaternary structure, part of the 30S ribosomal subunit. Contacts protein S4.

Its function is as follows. With S4 and S12 plays an important role in translational accuracy. The chain is Small ribosomal subunit protein uS5 from Methanothrix thermoacetophila (strain DSM 6194 / JCM 14653 / NBRC 101360 / PT) (Methanosaeta thermophila).